We begin with the raw amino-acid sequence, 682 residues long: MSRKQLALFEPTLVVQALKEAVKKLNPQAQWRNPVMFIVWIGSLLTTCISIAMASGVMPGNALFSAAISGWLWVTVLFANFAEALAEGRSKAQANSLKGVKKTAFARKLREPKYGAAADKVPADQLRKGDIVLVEAGDIIPCDGEVIEGGASVDESAITGESAPVIRESGGDFASVTGGTRILSDWLVIECSVNPGETFLDRMIAMVEGAQRRKTPNEIALTILLIALTIVFLLATATLWPFSAWGGNAVSVTVLVALLVCLIPTTIGGLLSAIGVAGMSRMLGANVIATSGRAVEAAGDVDVLLLDKTGTITLGNRQASEFIPAQGVEEKALADAAQLASLADETPEGRSIVILAKQRFNLRERDVQSLHATFVPFTAQSRMSGINIDNRMIRKGSVDAIRRHVEANGGHFPADVDQKVDQVARQGATPLVVVEGSRVLGVIALKDIVKGGIKERFAQLRKMGIKTVMITGDNRLTAAAIAAEAGVDDFLAEATPEAKLALIRQYQAEGRLVAMTGDGTNDAPALAQADVAVAMNSGTQAAKEAGNMVDLDSNPTKLIEVVHIGKQMLMTRGSLTTFSIANDVAKYFAIIPAAFAATYPQLNALNIMRLHSPDSAILSAVIFNALIIVFLIPLALKGVSYKPLTASAMLRRNLWIYGLGGLLVPFIGIKVIDLLLTVCGLV.

Transmembrane regions (helical) follow at residues 34–54, 62–82, 219–239, and 254–274; these read PVMF…IAMA, ALFS…ANFA, IALT…TATL, and VLVA…LSAI. The 4-aspartylphosphate intermediate role is filled by D307. Residues D344, E348, 377–384, and K395 contribute to the ATP site; that span reads FTAQSRMS. Residues D518 and D522 each contribute to the Mg(2+) site. 3 helical membrane-spanning segments follow: residues 588 to 608, 616 to 636, and 656 to 676; these read FAII…LNIM, AILS…PLAL, and IYGL…DLLL.

Belongs to the cation transport ATPase (P-type) (TC 3.A.3) family. Type IA subfamily. As to quaternary structure, the system is composed of three essential subunits: KdpA, KdpB and KdpC.

The protein localises to the cell inner membrane. The enzyme catalyses K(+)(out) + ATP + H2O = K(+)(in) + ADP + phosphate + H(+). Functionally, part of the high-affinity ATP-driven potassium transport (or Kdp) system, which catalyzes the hydrolysis of ATP coupled with the electrogenic transport of potassium into the cytoplasm. This subunit is responsible for energy coupling to the transport system and for the release of the potassium ions to the cytoplasm. The polypeptide is Potassium-transporting ATPase ATP-binding subunit (Escherichia coli O6:K15:H31 (strain 536 / UPEC)).